The primary structure comprises 89 residues: Snake venom serine protease rhinocerase (89 aa).

One can recognise a Peptidase S1 domain in the interval 1-89 (VIGGAECDIN…KVFDYIPWIK (89 aa)). The Charge relay system role is filled by Asp45. Residues Cys64 and Cys69 are joined by a disulfide bond.

This sequence belongs to the peptidase S1 family. Snake venom subfamily. In terms of processing, glycosylated. As to expression, expressed by the venom gland.

It is found in the secreted. With respect to regulation, inhibited by PMSF. Not inhibited by benzamidine. Its function is as follows. Snake venom serine protease that cleaves fibrinogen alpha and beta chains (FGA and FGB), but not gamma chains. Exhibits fibrinolytic and kininogenolytic. Preferentially cleaves after Arg and Lys residues. In Bitis rhinoceros (West African gaboon viper), this protein is Snake venom serine protease rhinocerase.